Consider the following 993-residue polypeptide: MAAEWASRFWLWATLLIPAAAVYEDQVGKFDWRQQYVGKVKFASLEFSPGSKKLVVATEKNVIAALNSRTGEILWRHVDKGTAEGAVDAMLLHGQDVITVSNGGRIMRSWETNIGGLNWEITLDSGSFQALGLVGLQESVRYIAVLKKTTLALHHLSSGHLKWVEHLPESDSIHYQMVYSYGSGVVWALGVVPFSHVNIVKFNVEDGEIVQQVRVSTPWLQHLSGACGVVDEAVLVCPDPSSRSLQTLALETEWELRQIPLQSLDLEFGSGFQPRVLPTQPNPVDASRAQFFLHLSPSHYALLQYHYGTLSLLKNFPQTALVSFATTGEKTVAAVMACRNEVQKSSSSEDGSMGSFSEKSSSKDSLACFNQTYTINLYLVETGRRLLDTTITFSLEQSGTRPERLYIQVFLKKDDSVGYRALVQTEDHLLLFLQQLAGKVVLWSREESLAEVVCLEMVDLPLTGAQAELEGEFGKKADGLLGMFLKRLSSQLILLQAWTSHLWKMFYDARKPRSQIKNEINIDTLARDEFNLQKMMVMVTASGKLFGIESSSGTILWKQYLPNVKPDSSFKLMVQRTTAHFPHPPQCTLLVKDKESGMSSLYVFNPIFGKWSQVAPPVLKRPILQSLLLPVMDQDYAKVLLLIDDEYKVTAFPATRNVLRQLHELAPSIFFYLVDAEQGRLCGYRLRKDLTTELSWELTIPPEVQRIVKVKGKRSSEHVHSQGRVMGDRSVLYKSLNPNLLAVVTESTDAHHERTFIGIFLIDGVTGRIIHSSVQKKAKGPVHIVHSENWVVYQYWNTKARRNEFTVLELYEGTEQYNATAFSSLDRPQLPQVLQQSYIFPSSISAMEATITERGITSRHLLIGLPSGAILSLPKALLDPRRPEIPTEQSREENLIPYSPDVQIHAERFINYNQTVSRMRGIYTAPSGLESTCLVVAYGLDIYQTRVYPSKQFDVLKDDYDYVLISSVLFGLVFATMITKRLAQVKLLNRAWR.

Positions 1–22 (MAAEWASRFWLWATLLIPAAAV) are cleaved as a signal peptide. The Lumenal segment spans residues 23 to 962 (YEDQVGKFDW…FDVLKDDYDY (940 aa)). 2 disulfide bridges follow: Cys-227–Cys-237 and Cys-338–Cys-368. Asn-370, Asn-818, and Asn-913 each carry an N-linked (GlcNAc...) asparagine glycan. The chain crosses the membrane as a helical span at residues 963 to 983 (VLISSVLFGLVFATMITKRLA). Residues 984–993 (QVKLLNRAWR) lie on the Cytoplasmic side of the membrane.

It belongs to the EMC1 family. In terms of assembly, component of the ER membrane protein complex (EMC).

It is found in the endoplasmic reticulum membrane. Functionally, part of the endoplasmic reticulum membrane protein complex (EMC) that enables the energy-independent insertion into endoplasmic reticulum membranes of newly synthesized membrane proteins. Preferentially accommodates proteins with transmembrane domains that are weakly hydrophobic or contain destabilizing features such as charged and aromatic residues. Involved in the cotranslational insertion of multi-pass membrane proteins in which stop-transfer membrane-anchor sequences become ER membrane spanning helices. It is also required for the post-translational insertion of tail-anchored/TA proteins in endoplasmic reticulum membranes. By mediating the proper cotranslational insertion of N-terminal transmembrane domains in an N-exo topology, with translocated N-terminus in the lumen of the ER, controls the topology of multi-pass membrane proteins like the G protein-coupled receptors. By regulating the insertion of various proteins in membranes, it is indirectly involved in many cellular processes. This chain is ER membrane protein complex subunit 1 (EMC1), found in Homo sapiens (Human).